The chain runs to 250 residues: 1-(5-phosphoribosyl)-5-[(5-phosphoribosylamino)methylideneamino] imidazole-4-carboxamide isomerase (250 aa).

Asp-7 serves as the catalytic Proton acceptor. The active-site Proton donor is Asp-129.

This sequence belongs to the HisA/HisF family.

The protein localises to the cytoplasm. The enzyme catalyses 1-(5-phospho-beta-D-ribosyl)-5-[(5-phospho-beta-D-ribosylamino)methylideneamino]imidazole-4-carboxamide = 5-[(5-phospho-1-deoxy-D-ribulos-1-ylimino)methylamino]-1-(5-phospho-beta-D-ribosyl)imidazole-4-carboxamide. It functions in the pathway amino-acid biosynthesis; L-histidine biosynthesis; L-histidine from 5-phospho-alpha-D-ribose 1-diphosphate: step 4/9. The polypeptide is 1-(5-phosphoribosyl)-5-[(5-phosphoribosylamino)methylideneamino] imidazole-4-carboxamide isomerase (Shewanella denitrificans (strain OS217 / ATCC BAA-1090 / DSM 15013)).